A 122-amino-acid chain; its full sequence is Large ribosomal subunit protein uL18 (122 aa).

It belongs to the universal ribosomal protein uL18 family. Part of the 50S ribosomal subunit; part of the 5S rRNA/L5/L18/L25 subcomplex. Contacts the 5S and 23S rRNAs.

Functionally, this is one of the proteins that bind and probably mediate the attachment of the 5S RNA into the large ribosomal subunit, where it forms part of the central protuberance. The sequence is that of Large ribosomal subunit protein uL18 from Lachnospira eligens (strain ATCC 27750 / DSM 3376 / VPI C15-48 / C15-B4) (Eubacterium eligens).